A 287-amino-acid polypeptide reads, in one-letter code: Stomatin-like protein 3 (287 aa).

The residue at position 3 (S3) is a Phosphoserine. A helical; Signal-anchor for type III membrane protein transmembrane segment spans residues 25-45; the sequence is WILFFLSFLLMLVTFPISVWM. The Cytoplasmic segment spans residues 46 to 287; the sequence is CLKIIKEYER…GNNKKVTAKA (242 aa). S237 bears the Phosphoserine mark.

Belongs to the band 7/mec-2 family. As to quaternary structure, homodimer. Interacts with PIEZO1 and PIEZO2. Expressed by all dorsal root ganglion neurons and is selectively expressed in neuronal tissues. Detected in olfactory epithelium.

The protein resides in the cell membrane. Functionally, required for the function of many mechanoreceptors. Modulate mechanotransduction channels and acid-sensing ion channels (ASIC) proteins. Potentiates PIEZO1 and PIEZO2 function by increasing their sensitivity to mechanical stimulations. This chain is Stomatin-like protein 3 (Stoml3), found in Mus musculus (Mouse).